Reading from the N-terminus, the 196-residue chain is GTP cyclohydrolase 1 (196 aa).

Positions 84, 87, and 157 each coordinate Zn(2+).

Belongs to the GTP cyclohydrolase I family. As to quaternary structure, toroid-shaped homodecamer, composed of two pentamers of five dimers.

It carries out the reaction GTP + H2O = 7,8-dihydroneopterin 3'-triphosphate + formate + H(+). It functions in the pathway cofactor biosynthesis; 7,8-dihydroneopterin triphosphate biosynthesis; 7,8-dihydroneopterin triphosphate from GTP: step 1/1. This Corynebacterium glutamicum (strain R) protein is GTP cyclohydrolase 1.